The primary structure comprises 451 residues: D-inositol 3-phosphate glycosyltransferase (451 aa).

H37 contributes to the 1D-myo-inositol 3-phosphate binding site. Residues 43-44 (QP) and G51 each bind UDP-N-acetyl-alpha-D-glucosamine. 1D-myo-inositol 3-phosphate contacts are provided by residues 48 to 53 (DAGGMN), K106, Y138, T162, and R182. UDP-N-acetyl-alpha-D-glucosamine contacts are provided by R259, K264, and R323. Positions 332, 333, and 335 each coordinate Mg(2+). Residues E345 and E353 each coordinate UDP-N-acetyl-alpha-D-glucosamine. T359 lines the Mg(2+) pocket.

It belongs to the glycosyltransferase group 1 family. MshA subfamily. As to quaternary structure, homodimer.

The catalysed reaction is 1D-myo-inositol 3-phosphate + UDP-N-acetyl-alpha-D-glucosamine = 1D-myo-inositol 2-acetamido-2-deoxy-alpha-D-glucopyranoside 3-phosphate + UDP + H(+). Catalyzes the transfer of a N-acetyl-glucosamine moiety to 1D-myo-inositol 3-phosphate to produce 1D-myo-inositol 2-acetamido-2-deoxy-glucopyranoside 3-phosphate in the mycothiol biosynthesis pathway. This chain is D-inositol 3-phosphate glycosyltransferase, found in Corynebacterium kroppenstedtii (strain DSM 44385 / JCM 11950 / CIP 105744 / CCUG 35717).